A 325-amino-acid polypeptide reads, in one-letter code: Aspartate carbamoyltransferase catalytic subunit (325 aa).

Arg-55 and Thr-56 together coordinate carbamoyl phosphate. Lys-83 lines the L-aspartate pocket. Positions 105, 135, and 138 each coordinate carbamoyl phosphate. Residues Arg-176 and Arg-230 each coordinate L-aspartate. Positions 271 and 272 each coordinate carbamoyl phosphate.

The protein belongs to the aspartate/ornithine carbamoyltransferase superfamily. ATCase family. In terms of assembly, heterododecamer (2C3:3R2) of six catalytic PyrB chains organized as two trimers (C3), and six regulatory PyrI chains organized as three dimers (R2).

The enzyme catalyses carbamoyl phosphate + L-aspartate = N-carbamoyl-L-aspartate + phosphate + H(+). It functions in the pathway pyrimidine metabolism; UMP biosynthesis via de novo pathway; (S)-dihydroorotate from bicarbonate: step 2/3. Its function is as follows. Catalyzes the condensation of carbamoyl phosphate and aspartate to form carbamoyl aspartate and inorganic phosphate, the committed step in the de novo pyrimidine nucleotide biosynthesis pathway. The polypeptide is Aspartate carbamoyltransferase catalytic subunit (Streptomyces avermitilis (strain ATCC 31267 / DSM 46492 / JCM 5070 / NBRC 14893 / NCIMB 12804 / NRRL 8165 / MA-4680)).